A 451-amino-acid polypeptide reads, in one-letter code: MTPKKMTHYQRHYHITTFGCQMNKADSERMAGILENMGFIWSEDPNQADLILYNTCTIRDNAEQKVYSYLGRQAKRKHENPDLTLIVAGCVAQQEGEQILRRVPELDLVMGPQHANRLEDLLQQVFDGNQVVATEPIHIIEDITKPRRDSTITAWVNVIYGCNERCSYCVVPNVRGVEQSRTPEAILAEMELLGKQGYKEVTLLGQNIDAYGRDLPGVTESGRHQHTLTDLLYTVHDVVGIERIRFATSHPRYFTERLIAACQELSKVCEHFHIPFQSGDNDILKAMKRGYTHEKYRQIIDKIRDYMPDASISADAIVGFPGETEEQFENTLKLVEDIGFDQLNTAAYSPRPGTPAALWDNQLSEEVKSDRLQRLNHLVAQKAAERSQRYLGRIEEVLVEDQNPKDSTQVMGRTRGNRLTFFKGDINQLKGRLIKVKITEVRAFSLTGEIV.

The MTTase N-terminal domain occupies 11 to 127 (RHYHITTFGC…LEDLLQQVFD (117 aa)). Residues Cys-20, Cys-56, Cys-90, Cys-162, Cys-166, and Cys-169 each coordinate [4Fe-4S] cluster. A Radical SAM core domain is found at 148–385 (RDSTITAWVN…NHLVAQKAAE (238 aa)). Residues 388-451 (QRYLGRIEEV…RAFSLTGEIV (64 aa)) form the TRAM domain.

Belongs to the methylthiotransferase family. MiaB subfamily. In terms of assembly, monomer. [4Fe-4S] cluster serves as cofactor.

It localises to the cytoplasm. It carries out the reaction N(6)-dimethylallyladenosine(37) in tRNA + (sulfur carrier)-SH + AH2 + 2 S-adenosyl-L-methionine = 2-methylsulfanyl-N(6)-dimethylallyladenosine(37) in tRNA + (sulfur carrier)-H + 5'-deoxyadenosine + L-methionine + A + S-adenosyl-L-homocysteine + 2 H(+). Functionally, catalyzes the methylthiolation of N6-(dimethylallyl)adenosine (i(6)A), leading to the formation of 2-methylthio-N6-(dimethylallyl)adenosine (ms(2)i(6)A) at position 37 in tRNAs that read codons beginning with uridine. This is tRNA-2-methylthio-N(6)-dimethylallyladenosine synthase from Rippkaea orientalis (strain PCC 8801 / RF-1) (Cyanothece sp. (strain PCC 8801)).